A 395-amino-acid chain; its full sequence is 8-amino-3,8-dideoxy-alpha-D-manno-octulosonate transaminase (395 aa).

Position 186 is an N6-(pyridoxal phosphate)lysine (Lys186).

Belongs to the DegT/DnrJ/EryC1 family. It depends on pyridoxal 5'-phosphate as a cofactor.

The enzyme catalyses 8-amino-3,8-dideoxy-alpha-D-manno-octulosonate + 2-oxoglutarate = 3,8-dideoxy-8-oxo-alpha-D-manno-octulosonate + L-glutamate. Its pathway is bacterial outer membrane biogenesis; lipopolysaccharide biosynthesis. In terms of biological role, catalyzes the second (last) step of the biosynthesis of Kdo8N (8-amino-3,8-dideoxy-D-manno-octulosonate) from Kdo (3-deoxy-D-manno-octulosonate). This chain is 8-amino-3,8-dideoxy-alpha-D-manno-octulosonate transaminase, found in Shewanella oneidensis (strain ATCC 700550 / JCM 31522 / CIP 106686 / LMG 19005 / NCIMB 14063 / MR-1).